Reading from the N-terminus, the 234-residue chain is Uridylate kinase (234 aa).

Residue Lys-9–Gly-12 coordinates ATP. Gly-51 is a UMP binding site. ATP contacts are provided by Gly-52 and Arg-56. UMP-binding positions include Asp-71 and Cys-132–Thr-139. Thr-159, Tyr-165, and Asp-168 together coordinate ATP.

This sequence belongs to the UMP kinase family. As to quaternary structure, homohexamer.

It is found in the cytoplasm. It carries out the reaction UMP + ATP = UDP + ADP. The protein operates within pyrimidine metabolism; CTP biosynthesis via de novo pathway; UDP from UMP (UMPK route): step 1/1. Its activity is regulated as follows. Inhibited by UTP. In terms of biological role, catalyzes the reversible phosphorylation of UMP to UDP. This Prochlorococcus marinus (strain AS9601) protein is Uridylate kinase.